A 231-amino-acid polypeptide reads, in one-letter code: Uracil-DNA glycosylase (231 aa).

Asp74 serves as the catalytic Proton acceptor.

Belongs to the uracil-DNA glycosylase (UDG) superfamily. UNG family.

Its subcellular location is the cytoplasm. The catalysed reaction is Hydrolyzes single-stranded DNA or mismatched double-stranded DNA and polynucleotides, releasing free uracil.. Excises uracil residues from the DNA which can arise as a result of misincorporation of dUMP residues by DNA polymerase or due to deamination of cytosine. The chain is Uracil-DNA glycosylase from Campylobacter jejuni subsp. jejuni serotype O:23/36 (strain 81-176).